The chain runs to 204 residues: Glycerol-3-phosphate acyltransferase (204 aa).

4 helical membrane-spanning segments follow: residues 8 to 28 (NAQF…LLLA), 76 to 96 (GVLV…LWGI), 122 to 142 (MGVM…VWAL), and 166 to 186 (FILH…VLLY).

It belongs to the PlsY family. In terms of assembly, probably interacts with PlsX.

The protein localises to the cell inner membrane. It catalyses the reaction an acyl phosphate + sn-glycerol 3-phosphate = a 1-acyl-sn-glycero-3-phosphate + phosphate. It participates in lipid metabolism; phospholipid metabolism. Catalyzes the transfer of an acyl group from acyl-phosphate (acyl-PO(4)) to glycerol-3-phosphate (G3P) to form lysophosphatidic acid (LPA). This enzyme utilizes acyl-phosphate as fatty acyl donor, but not acyl-CoA or acyl-ACP. This chain is Glycerol-3-phosphate acyltransferase, found in Sulfurimonas denitrificans (strain ATCC 33889 / DSM 1251) (Thiomicrospira denitrificans (strain ATCC 33889 / DSM 1251)).